Here is a 458-residue protein sequence, read N- to C-terminus: Kelch repeat and BTB domain-containing protein 13 (458 aa).

Residues 7–74 (VPVQVWVDGQ…LRGERPALAA (68 aa)) form the BTB domain. Kelch repeat units lie at residues 159–209 (AVST…TLGN), 210–258 (KLYI…GFEG), 259–305 (RLYA…QARG), 307–350 (LFVC…VAHR), and 352–400 (SLYV…VVRG).

Component of the BCR(KBTBD13) E3 ubiquitin ligase complex, at least composed of CUL3 and KBTBD13 and RBX1. Interacts with CUL3. Post-translationally, autoubiquitinated. Expressed in skeletal muscle, heart and lung.

It is found in the cytoplasm. Its pathway is protein modification; protein ubiquitination. Its function is as follows. Substrate-specific adapter of a BCR (BTB-CUL3-RBX1) E3 ubiquitin ligase complex. The sequence is that of Kelch repeat and BTB domain-containing protein 13 (Kbtbd13) from Mus musculus (Mouse).